The following is a 338-amino-acid chain: Fructose-1,6-bisphosphatase class 1 (338 aa).

Mg(2+)-binding residues include glutamate 90, aspartate 112, leucine 114, and aspartate 115. Substrate is bound by residues 115–118 (DGSS), asparagine 207, and lysine 273. Position 279 (glutamate 279) interacts with Mg(2+).

This sequence belongs to the FBPase class 1 family. In terms of assembly, homotetramer. Mg(2+) is required as a cofactor.

It localises to the cytoplasm. The enzyme catalyses beta-D-fructose 1,6-bisphosphate + H2O = beta-D-fructose 6-phosphate + phosphate. It participates in carbohydrate biosynthesis; gluconeogenesis. The polypeptide is Fructose-1,6-bisphosphatase class 1 (Xanthomonas campestris pv. campestris (strain 8004)).